The sequence spans 478 residues: Early growth response protein 4 (478 aa).

Residues threonine 275–proline 302 are disordered. A compositionally biased stretch (gly residues) spans glycine 286–glycine 296. 3 C2H2-type zinc fingers span residues phenylalanine 372–histidine 396, phenylalanine 402–histidine 424, and phenylalanine 430–histidine 452.

It belongs to the EGR C2H2-type zinc-finger protein family.

Its subcellular location is the nucleus. Its function is as follows. Transcriptional regulator. Recognizes and binds to the DNA sequence 5'-GCGGGGGCG-3' (GSG). Activates the transcription of target genes whose products are required for mitogenesis and differentiation. The sequence is that of Early growth response protein 4 (Egr4) from Mus musculus (Mouse).